Here is a 377-residue protein sequence, read N- to C-terminus: Nitric oxide reductase FlRd-NAD(+) reductase (377 aa).

It belongs to the FAD-dependent oxidoreductase family. It depends on FAD as a cofactor.

The protein resides in the cytoplasm. The catalysed reaction is 2 reduced [nitric oxide reductase rubredoxin domain] + NAD(+) + H(+) = 2 oxidized [nitric oxide reductase rubredoxin domain] + NADH. The protein operates within nitrogen metabolism; nitric oxide reduction. Its function is as follows. One of at least two accessory proteins for anaerobic nitric oxide (NO) reductase. Reduces the rubredoxin moiety of NO reductase. In Salmonella paratyphi B (strain ATCC BAA-1250 / SPB7), this protein is Nitric oxide reductase FlRd-NAD(+) reductase.